The following is a 510-amino-acid chain: Cytochrome P450 monooxygenase AFLA_114810 (510 aa).

The N-terminal stretch at 1–17 is a signal peptide; sequence MLILLGLLCLYTGLYVA. Residue Cys444 coordinates heme.

Belongs to the cytochrome P450 family. The cofactor is heme.

It functions in the pathway secondary metabolite biosynthesis. Functionally, cytochrome P450 monooxygenase; part of the gene cluster 41 that mediates the biosynthesis of an extracellular and diffusible metabolite that is able to stimulate colony sclerotial production. In Aspergillus flavus (strain ATCC 200026 / FGSC A1120 / IAM 13836 / NRRL 3357 / JCM 12722 / SRRC 167), this protein is Cytochrome P450 monooxygenase AFLA_114810.